We begin with the raw amino-acid sequence, 321 residues long: MTISVPQLDCPLSRPVHPEGERADAYAVEWLRGVGLMADEADAAPVLAVGLGRLAACYVDENASWDTLAFMTILMAWYAEYDDRAIDSTGAIDGLTDAEVAELHRALGEILRDRPAPDPSDPVQRGLADVWRTLNGLASDWDRAAFVDTTLRYFEANRYERVNIRRGIPPTPSAHIGMRRHGGHVYGMYILGAAVNGYRPERRVLDHAAVRELETLAANYTSWANDLHSFAREHRMGQVNNLVWSVHHHEGLTFQQAADRVADLCDKELAAYLELRQTLPELGIPLTGATGRHVRFLEDMMWSMVDWSARSARYDVVPEAA.

4 residues coordinate Mg(2+): Asp82, Asn225, Ser229, and Glu233. The DDxx(x)D/E motif signature appears at 82–87; that stretch reads DDRAID. The NDxxSxxxD/E motif motif lies at 225-233; sequence NDLHSFARE.

Belongs to the terpene synthase family. It depends on Mg(2+) as a cofactor.

It carries out the reaction (2E,6E,10E)-geranylgeranyl diphosphate = hydropyrene + diphosphate. The catalysed reaction is (2E,6E,10E)-geranylgeranyl diphosphate + H2O = hydropyrenol + diphosphate. The enzyme catalyses (2E,6E,10E)-geranylgeranyl diphosphate = isoelisabethatriene + diphosphate. The protein operates within secondary metabolite biosynthesis; terpenoid biosynthesis. In terms of biological role, terpene synthase that catalyzes the conversion of geranylgeranyl diphosphate (GGPP) into a mixture of diterpenes, including hydropyrene (HP), hydropyrenol (HPol), isoelisabethatriene and traces of isoelisabethatriene B. Hydropyrene is the main product. Some other diterpenoids are also produced in very low quantities. The polypeptide is Hydropyrene synthase (Streptomyces clavuligerus).